Here is a 258-residue protein sequence, read N- to C-terminus: Synapse differentiation-inducing gene protein 1 (258 aa).

Over 1–181 the chain is Cytoplasmic; that stretch reads MDGIVEQKSV…NFLMMPPRDH (181 aa). At Ser-137 the chain carries Phosphoserine. A helical transmembrane segment spans residues 182-202; sequence LGLSVFSMLCCFWPLGIAAFY. Residues 203–228 are Extracellular-facing; the sequence is LSHETNKAVAKGDFHQASTSSRRALF. An intramembrane region (helical) is located at residues 229–249; that stretch reads LAVLSITIGTGIYVGVAVALI. Residues 250–258 lie on the Extracellular side of the membrane; it reads AYLSKNNHL.

The protein belongs to the CD225/Dispanin family. As to quaternary structure, homodimer. Interacts with GRIA1 and GRIA2. Enriched in the cerebellum and also expressed in the neocortex and modestly in the hippocampus (at protein level). Expressed in hippocampal neurons, both in cell body and neurites, however its presence is enriched at excitatory synapses and also found in postsynaptic cells.

It localises to the cell membrane. The protein localises to the early endosome membrane. The protein resides in the postsynaptic density membrane. It is found in the synapse. Its subcellular location is the cell projection. It localises to the dendrite. The protein localises to the dendritic spine. Functionally, may regulate AMPA receptor content at nascent synapses, and have a role in postsynaptic development and maturation. The sequence is that of Synapse differentiation-inducing gene protein 1 (Syndig1) from Rattus norvegicus (Rat).